The sequence spans 174 residues: Bifunctional protein PyrR (174 aa).

Substrate contacts are provided by residues 38–39, 95–103, and Arg-128; these read SG and DDVLATGRT. The PRPP-binding signature appears at 91-103; that stretch reads ILLVDDVLATGRT.

It belongs to the purine/pyrimidine phosphoribosyltransferase family. PyrR subfamily.

The catalysed reaction is UMP + diphosphate = 5-phospho-alpha-D-ribose 1-diphosphate + uracil. Functionally, regulates the transcription of the pyrimidine nucleotide (pyr) operon in response to exogenous pyrimidines. In terms of biological role, also displays a weak uracil phosphoribosyltransferase activity which is not physiologically significant. This Ralstonia nicotianae (strain ATCC BAA-1114 / GMI1000) (Ralstonia solanacearum) protein is Bifunctional protein PyrR.